The following is a 162-amino-acid chain: ATP synthase subunit delta, mitochondrial (162 aa).

A mitochondrion-targeting transit peptide spans 1-25 (MSSLRLLASAARRATTHVAYTRRGY).

The protein belongs to the ATPase epsilon chain family. As to quaternary structure, F-type ATPases have 2 components, CF(1) - the catalytic core - and CF(0) - the membrane proton channel. CF(1) has five subunits: alpha(3), beta(3), gamma(1), delta(1), epsilon(1). CF(0) has three main subunits: a, b and c.

The protein resides in the mitochondrion. The protein localises to the mitochondrion inner membrane. In terms of biological role, mitochondrial membrane ATP synthase (F(1)F(0) ATP synthase or Complex V) produces ATP from ADP in the presence of a proton gradient across the membrane which is generated by electron transport complexes of the respiratory chain. F-type ATPases consist of two structural domains, F(1) - containing the extramembraneous catalytic core, and F(0) - containing the membrane proton channel, linked together by a central stalk and a peripheral stalk. During catalysis, ATP turnover in the catalytic domain of F(1) is coupled via a rotary mechanism of the central stalk subunits to proton translocation. Part of the complex F(1) domain and of the central stalk which is part of the complex rotary element. Rotation of the central stalk against the surrounding alpha(3)beta(3) subunits leads to hydrolysis of ATP in three separate catalytic sites on the beta subunits. The protein is ATP synthase subunit delta, mitochondrial (atpD) of Agaricus bisporus (White button mushroom).